The primary structure comprises 207 residues: Pyridoxine/pyridoxamine 5'-phosphate oxidase (207 aa).

FMN-binding positions include 53–58, 68–69, K75, and Q97; these read RMVLLK and YT. Position 58 (K58) interacts with substrate. Substrate-binding residues include Y115, R119, and S123. Residues 132 to 133 and W177 each bind FMN; that span reads QS. 183–185 lines the substrate pocket; sequence RLH. R187 is a binding site for FMN.

It belongs to the pyridoxamine 5'-phosphate oxidase family. In terms of assembly, homodimer. It depends on FMN as a cofactor.

It carries out the reaction pyridoxamine 5'-phosphate + O2 + H2O = pyridoxal 5'-phosphate + H2O2 + NH4(+). It catalyses the reaction pyridoxine 5'-phosphate + O2 = pyridoxal 5'-phosphate + H2O2. It participates in cofactor metabolism; pyridoxal 5'-phosphate salvage; pyridoxal 5'-phosphate from pyridoxamine 5'-phosphate: step 1/1. The protein operates within cofactor metabolism; pyridoxal 5'-phosphate salvage; pyridoxal 5'-phosphate from pyridoxine 5'-phosphate: step 1/1. In terms of biological role, catalyzes the oxidation of either pyridoxine 5'-phosphate (PNP) or pyridoxamine 5'-phosphate (PMP) into pyridoxal 5'-phosphate (PLP). This chain is Pyridoxine/pyridoxamine 5'-phosphate oxidase, found in Bartonella quintana (strain Toulouse) (Rochalimaea quintana).